We begin with the raw amino-acid sequence, 368 residues long: DNA replication and repair protein RecF (368 aa).

30 to 37 contacts ATP; the sequence is GDNGAGKT.

The protein belongs to the RecF family.

It localises to the cytoplasm. Functionally, the RecF protein is involved in DNA metabolism; it is required for DNA replication and normal SOS inducibility. RecF binds preferentially to single-stranded, linear DNA. It also seems to bind ATP. In Xanthomonas campestris pv. campestris (strain 8004), this protein is DNA replication and repair protein RecF.